The sequence spans 315 residues: Protoheme IX farnesyltransferase (315 aa).

Transmembrane regions (helical) follow at residues 21–41 (YFAL…LVGL), 52–74 (VGFC…NMWW), 98–118 (GEAL…LALA), 121–141 (LLAA…YSMW), 150–170 (IVIG…AATG), 177–197 (VLMF…LALF), 223–243 (ILVY…TPVA), 246–266 (LYLA…WDIW), and 284–304 (FFKF…AEAI).

The protein belongs to the UbiA prenyltransferase family. Protoheme IX farnesyltransferase subfamily. Interacts with CtaA.

The protein localises to the cell inner membrane. It catalyses the reaction heme b + (2E,6E)-farnesyl diphosphate + H2O = Fe(II)-heme o + diphosphate. It participates in porphyrin-containing compound metabolism; heme O biosynthesis; heme O from protoheme: step 1/1. Converts heme B (protoheme IX) to heme O by substitution of the vinyl group on carbon 2 of heme B porphyrin ring with a hydroxyethyl farnesyl side group. The sequence is that of Protoheme IX farnesyltransferase from Dinoroseobacter shibae (strain DSM 16493 / NCIMB 14021 / DFL 12).